A 341-amino-acid chain; its full sequence is S-adenosylmethionine:tRNA ribosyltransferase-isomerase (341 aa).

This sequence belongs to the QueA family. As to quaternary structure, monomer.

It localises to the cytoplasm. It carries out the reaction 7-aminomethyl-7-carbaguanosine(34) in tRNA + S-adenosyl-L-methionine = epoxyqueuosine(34) in tRNA + adenine + L-methionine + 2 H(+). It functions in the pathway tRNA modification; tRNA-queuosine biosynthesis. Transfers and isomerizes the ribose moiety from AdoMet to the 7-aminomethyl group of 7-deazaguanine (preQ1-tRNA) to give epoxyqueuosine (oQ-tRNA). This chain is S-adenosylmethionine:tRNA ribosyltransferase-isomerase, found in Symbiobacterium thermophilum (strain DSM 24528 / JCM 14929 / IAM 14863 / T).